Consider the following 940-residue polypeptide: Pentatricopeptide repeat-containing protein At5g14770, mitochondrial (940 aa).

A mitochondrion-targeting transit peptide spans 1–24 (MIMIRIWNNYKGKYRFFLSNCRSF). 24 PPR repeats span residues 59 to 93 (YVSL…GVVP), 94 to 129 (DSRL…GVSP), 130 to 161 (DVFA…VISI), 162 to 196 (DTVT…GILP), 197 to 231 (DTVS…NLIT), 241 to 259 (NLHA…GFDP), 260 to 294 (DVVT…SVYP), 295 to 329 (NHVT…GIPV), 330 to 364 (DLVV…NQVP), 365 to 399 (NVVT…SVIP), 400 to 434 (NVVT…NVVP), 435 to 469 (NGFT…GVEE), 470 to 504 (NNYI…GVTL), 505 to 539 (DQIN…GMPW), 540 to 573 (DVVS…GIEP), 574 to 608 (DIAT…GIKP), 609 to 643 (SLMS…EIHP), 644 to 678 (NLTT…GIKL), 679 to 713 (SRQV…GFIP), 714 to 748 (DTVT…GISP), 749 to 783 (NVAT…GMRP), 784 to 818 (DDFT…GLVP), 819 to 853 (KTST…GVSP), and 854 to 891 (NTST…GLLK).

This sequence belongs to the PPR family. P subfamily.

It is found in the mitochondrion. This is Pentatricopeptide repeat-containing protein At5g14770, mitochondrial from Arabidopsis thaliana (Mouse-ear cress).